The sequence spans 289 residues: Phosphatidylserine decarboxylase proenzyme (289 aa).

Residues D92, H149, and S254 each act as charge relay system; for autoendoproteolytic cleavage activity in the active site. The active-site Schiff-base intermediate with substrate; via pyruvic acid; for decarboxylase activity is S254. S254 carries the pyruvic acid (Ser); by autocatalysis modification.

The protein belongs to the phosphatidylserine decarboxylase family. PSD-B subfamily. Prokaryotic type I sub-subfamily. In terms of assembly, heterodimer of a large membrane-associated beta subunit and a small pyruvoyl-containing alpha subunit. Requires pyruvate as cofactor. Is synthesized initially as an inactive proenzyme. Formation of the active enzyme involves a self-maturation process in which the active site pyruvoyl group is generated from an internal serine residue via an autocatalytic post-translational modification. Two non-identical subunits are generated from the proenzyme in this reaction, and the pyruvate is formed at the N-terminus of the alpha chain, which is derived from the carboxyl end of the proenzyme. The autoendoproteolytic cleavage occurs by a canonical serine protease mechanism, in which the side chain hydroxyl group of the serine supplies its oxygen atom to form the C-terminus of the beta chain, while the remainder of the serine residue undergoes an oxidative deamination to produce ammonia and the pyruvoyl prosthetic group on the alpha chain. During this reaction, the Ser that is part of the protease active site of the proenzyme becomes the pyruvoyl prosthetic group, which constitutes an essential element of the active site of the mature decarboxylase.

It is found in the cell membrane. It carries out the reaction a 1,2-diacyl-sn-glycero-3-phospho-L-serine + H(+) = a 1,2-diacyl-sn-glycero-3-phosphoethanolamine + CO2. The protein operates within phospholipid metabolism; phosphatidylethanolamine biosynthesis; phosphatidylethanolamine from CDP-diacylglycerol: step 2/2. In terms of biological role, catalyzes the formation of phosphatidylethanolamine (PtdEtn) from phosphatidylserine (PtdSer). This chain is Phosphatidylserine decarboxylase proenzyme, found in Pseudomonas aeruginosa (strain ATCC 15692 / DSM 22644 / CIP 104116 / JCM 14847 / LMG 12228 / 1C / PRS 101 / PAO1).